A 346-amino-acid polypeptide reads, in one-letter code: MSIVTNGNLNKYFQQIKNLKEEFVKKYNSGESTEEIIGKMRQIHGQAIFEDTRNKFQLAKNNKLNPSDFYNLSVDYCTLANMDKKIRHLEILQFERKHKGYTHKGLDTDKYEINRSLIRSNGPLVGTTQPIQSTQANQISMTGKGTQDPVNKVRPEIRKDDDGVDVISLHNTQTEDVTTRRVNSDVIPTEFNNTMNTQNQSNSNYLNTTEYLTNLSNTEANRLMSDYNNGNYELTDSQKQQGGNHIFEVGKPTVVNFYADWCGYSRQFMPNWEKVRDSVKKKYGERIQLSSLNVGQDTDKVNISKNAGVNGYPTVVIFKDGNTYHKVAGNASADDIVKFIDETMSR.

In terms of domain architecture, Thioredoxin spans 212–345 (LTNLSNTEAN…IVKFIDETMS (134 aa)).

The protein resides in the virion. The protein is Thioredoxin domain-containing protein R362 of Acanthamoeba polyphaga (Amoeba).